Here is a 338-residue protein sequence, read N- to C-terminus: MKVFYDKDCDLSLIKGKTVAIIGYGSQGHAHAQNLNDSGVKVVVGLRKGGASWDKVGKAGLTVKEVNDAVKEADVVMILLPDEQIAEVYKNNVEPHIKQGASLAFAHGFNVHYNQVVPRADLDVWMVAPKAPGHTVRNTYTQGGGVPHLVAVHQDKSGKARDLALSYAMANGGGKAGIIETNFKEETETDLFGEQAVLCGGAVELIKMGYETLVEAGYAPEMAYFECLHELKLIVDLIYEGGIANMNYSISNNAEFGEYVTGPEVINEQSRAAMRNALKRIQNGDYAKMFIQEGRLNYPSMTARRRNTADHSIEVVGAQLRAMMPWIAKNKLVDQTRN.

Positions 1–181 (MKVFYDKDCD…GGGKAGIIET (181 aa)) constitute a KARI N-terminal Rossmann domain. NADP(+) contacts are provided by residues 24–27 (YGSQ), R47, and S52. H107 is a catalytic residue. G133 lines the NADP(+) pocket. The KARI C-terminal knotted domain occupies 182 to 327 (NFKEETETDL…AQLRAMMPWI (146 aa)). 4 residues coordinate Mg(2+): D190, E194, E226, and E230. S251 contributes to the substrate binding site.

This sequence belongs to the ketol-acid reductoisomerase family. Mg(2+) is required as a cofactor.

The catalysed reaction is (2R)-2,3-dihydroxy-3-methylbutanoate + NADP(+) = (2S)-2-acetolactate + NADPH + H(+). It catalyses the reaction (2R,3R)-2,3-dihydroxy-3-methylpentanoate + NADP(+) = (S)-2-ethyl-2-hydroxy-3-oxobutanoate + NADPH + H(+). Its pathway is amino-acid biosynthesis; L-isoleucine biosynthesis; L-isoleucine from 2-oxobutanoate: step 2/4. It participates in amino-acid biosynthesis; L-valine biosynthesis; L-valine from pyruvate: step 2/4. Its function is as follows. Involved in the biosynthesis of branched-chain amino acids (BCAA). Catalyzes an alkyl-migration followed by a ketol-acid reduction of (S)-2-acetolactate (S2AL) to yield (R)-2,3-dihydroxy-isovalerate. In the isomerase reaction, S2AL is rearranged via a Mg-dependent methyl migration to produce 3-hydroxy-3-methyl-2-ketobutyrate (HMKB). In the reductase reaction, this 2-ketoacid undergoes a metal-dependent reduction by NADPH to yield (R)-2,3-dihydroxy-isovalerate. The protein is Ketol-acid reductoisomerase (NADP(+)) of Acidovorax ebreus (strain TPSY) (Diaphorobacter sp. (strain TPSY)).